Consider the following 309-residue polypeptide: uncharacterized protein (309 aa).

In terms of domain architecture, HTH lysR-type spans 1–60 (MKPLLDVLMILDALEKEGSFAAASAKLYKTPSALSYTVHKLESDLNIQLLDRSGHRAKFT). Positions 20-39 (FAAASAKLYKTPSALSYTVH) form a DNA-binding region, H-T-H motif.

Belongs to the LysR transcriptional regulatory family.

This is an uncharacterized protein from Escherichia coli (strain K12).